Here is a 201-residue protein sequence, read N- to C-terminus: B-cell CLL/lymphoma 7 protein family member A (201 aa).

Residues 46–201 (YKWVPVTEPK…GKIDSSSEES (156 aa)) are disordered. A compositionally biased stretch (basic and acidic residues) spans 54–71 (PKSDDNKNKKKGKDDKYG). 3 stretches are compositionally biased toward polar residues: residues 73–83 (EVTTPENSSSP), 93–114 (SNQS…NTSP), and 133–142 (QYPSKQPSSG). Positions 158 to 167 (TSKRDSKSQG) are enriched in basic and acidic residues. The span at 168–179 (DSESFLDSSKSA) shows a compositional bias: polar residues. Basic and acidic residues predominate over residues 192 to 201 (GKIDSSSEES).

It belongs to the BCL7 family.

The polypeptide is B-cell CLL/lymphoma 7 protein family member A (bcl7a) (Danio rerio (Zebrafish)).